The primary structure comprises 240 residues: Dihydromonapterin reductase (240 aa).

The active-site Proton acceptor is the Tyr-152.

It belongs to the short-chain dehydrogenases/reductases (SDR) family. FolM subfamily.

The catalysed reaction is (6S)-5,6,7,8-tetrahydrofolate + NADP(+) = 7,8-dihydrofolate + NADPH + H(+). The enzyme catalyses 7,8-dihydromonapterin + NADPH + H(+) = 5,6,7,8-tetrahydromonapterin + NADP(+). In terms of biological role, catalyzes the reduction of dihydromonapterin to tetrahydromonapterin. Also has lower activity with dihydrofolate. This is Dihydromonapterin reductase (folM) from Escherichia coli O1:K1 / APEC.